Here is a 242-residue protein sequence, read N- to C-terminus: Prosalusin (242 aa).

Residues 1 to 26 form the signal peptide; that stretch reads MAAATRGCRPWGSLLGLLGLVSAAAA. The propeptide occupies 27–189; sequence AWDLASLRCT…SSWVVYGTNY (163 aa). 93–100 serves as a coordination point for ATP; that stretch reads GWTGTGKS. An N-linked (GlcNAc...) asparagine glycan is attached at Asn-149. A disordered region spans residues 210-242; that stretch reads PPRRSGALPPAPAAPRPALRAQRAGPAGPGAKG. The segment covering 225–235 has biased composition (low complexity); sequence RPALRAQRAGP. Position 241 is a lysine amide (Lys-241).

Belongs to the ClpA/ClpB family. Torsin subfamily. In terms of processing, amidation of salusin-alpha(29-Gly) by peptidylglycine alpha-amidating monooxygenase, PAM, converts Lys-241-Gly-242 to Lys-241-NH2 and gives raise to salusin-alpha. Isoform 4 is ubiquitously expressed, with high level in vascular endothelial cells and vascular smooth muscle cells.

It is found in the secreted. Functionally, salusins -alpha and -beta may be endocrine and/or paracrine factors able to increase intracellular calcium concentrations and induce cell mitogenesis. Salusins may also be potent hypotensive peptides. This chain is Prosalusin (TOR2A), found in Homo sapiens (Human).